We begin with the raw amino-acid sequence, 7081 residues long: Leucine-rich repeat transmembrane protein CCDC168 (7081 aa).

Residues 37–57 traverse the membrane as a helical segment; sequence WVAIFFIILLGIIFEIILMKA. LRR repeat units follow at residues 233–256 and 420–445; these read PCPL…VRNQ and NAEF…SVKA. Residues 717 to 745 are disordered; the sequence is EDLQSSENSHLQLSNGEELPTSTPKTQRC. Residues 718 to 742 are compositionally biased toward polar residues; sequence DLQSSENSHLQLSNGEELPTSTPKT. The stretch at 865–890 is one LRR 3 repeat; the sequence is ADTLRIIRLSHSASKQEKLPDEKETQ. The interval 943 to 1009 is disordered; that stretch reads QISSGSSKAP…DPKNPLTMPE (67 aa). A compositionally biased stretch (polar residues) spans 958–970; sequence VQPQTLSTQTILE. Over residues 981 to 999 the composition is skewed to basic and acidic residues; sequence QVEKVKQSTDRPTDRESAG. Residues 1050 to 1075 form an LRR 4 repeat; that stretch reads LPAVALGSFNNHLLTLPYFKRQEIKK. 2 stretches are compositionally biased toward polar residues: residues 1274–1286 and 1295–1304; these read KCTA…SPIS and LNQTRESYIP. A disordered region spans residues 1274-1304; that stretch reads KCTADSETPSPISGKSLIGDPLNQTRESYIP. Residues 1501-1527 form an LRR 5 repeat; it reads NCLTLELHINGQRLQHQTGFEQTTLET. Basic and acidic residues-rich tracts occupy residues 1773–1784 and 1793–1804; these read ETEKDTLREKRL and TSPHEDSITSRD. 4 disordered regions span residues 1773-1804, 1954-1973, 2008-2031, and 2083-2103; these read ETEK…TSRD, KSPH…ESGS, STHQ…EGRS, and TGKS…NPRR. The span at 1964–1973 shows a compositional bias: polar residues; it reads ANLTDMESGS. The stretch at 2373-2397 is one LRR 6 repeat; sequence KNQINTIQLSERKIILNPKCLTMKE. Residues 2637–2680 form a disordered region; sequence GRHSPASEEMKRQNGRLKMADRSSPQGRPLQAKQSAVSQSPDTA. Residues 2668–2678 show a composition bias toward polar residues; the sequence is AKQSAVSQSPD. LRR repeat units follow at residues 2727–2749, 2832–2855, 2862–2889, 3433–3458, and 3630–3653; these read SKIH…KTRA, IQQQ…VYDS, IKKL…KLEK, LSSR…RLEW, and ILSL…NVKS. Positions 3730 to 3756 are disordered; that stretch reads SLSHSNSNSRTKAGKDKSGTLKGCLPP. The LRR 12 repeat unit spans residues 3875 to 3898; that stretch reads MRGITRFCLSSSTQQELSDTMEKC. Disordered regions lie at residues 4119 to 4260, 4293 to 4428, 4729 to 4756, 4794 to 4817, 4831 to 4859, 4928 to 4955, 4966 to 4985, and 5191 to 5212; these read ELSH…DGDK, QGII…KQET, QESL…LLPQ, SPLS…QDRT, MPSL…RLAN, GVQE…YLNC, LGKT…SDSG, and QKVK…SPLH. Basic and acidic residues-rich tracts occupy residues 4121–4133, 4147–4176, 4192–4245, 4329–4361, 4375–4401, and 4415–4426; these read SHQK…EKAD, KAKD…DKGL, EPGK…EQQK, QKAK…DLKG, EPGK…NRDG, and EQEKRDGHKSKQ. The span at 4731–4743 shows a compositional bias: polar residues; the sequence is SLPSRQTAPTKPT. 2 stretches are compositionally biased toward basic and acidic residues: residues 4746–4756 and 4798–4817; these read LVKKEKQLLPQ and KRKE…QDRT. A compositionally biased stretch (polar residues) spans 5203 to 5212; the sequence is KSPSRSSPLH. An LRR 13 repeat occupies 5311–5336; it reads LSQLELDKETHLGNEMLRLKRPILRR. Residues 5467–5496 form a disordered region; the sequence is LPDTEKTADAEARSGDVRKGKPHRSQKENR. Over residues 5469 to 5496 the composition is skewed to basic and acidic residues; the sequence is DTEKTADAEARSGDVRKGKPHRSQKENR. The stretch at 5522–5545 is one LRR 14 repeat; that stretch reads LNAKELVLNINKLEKKVHKDKDEA. Disordered regions lie at residues 5564-5583 and 5763-5792; these read LDSG…SSCP and QQET…SNDR. A compositionally biased stretch (basic and acidic residues) spans 5779–5792; it reads KFDKPKEDGQSNDR. 5 LRR repeats span residues 5901 to 5924, 6259 to 6282, 6419 to 6442, 6552 to 6575, and 6613 to 6637; these read KQAL…LFPP, PDLR…ECPS, HLES…SLQM, HFSV…SYAM, and QIDL…TFPK. 2 disordered regions span residues 6859–6878 and 6916–6950; these read CKSH…SPDW and APLT…RSDL. A compositionally biased stretch (basic residues) spans 6860-6871; it reads KSHKSRKYRSSS. The span at 6937–6950 shows a compositional bias: basic and acidic residues; it reads HPESQERKKARSDL. One copy of the LRR 20 repeat lies at 7012–7036; that stretch reads NRPFFFACVPADSLEVIPKTIRWTI.

It localises to the membrane. The polypeptide is Leucine-rich repeat transmembrane protein CCDC168 (Homo sapiens (Human)).